The following is a 226-amino-acid chain: Orotate phosphoribosyltransferase (226 aa).

5-phospho-alpha-D-ribose 1-diphosphate is bound by residues R107, K108, K111, and 133–141; that span reads EDLTTDGGS. An orotate-binding site is contributed by T137.

The protein belongs to the purine/pyrimidine phosphoribosyltransferase family. PyrE subfamily. Homodimer. It depends on Mg(2+) as a cofactor.

The catalysed reaction is orotidine 5'-phosphate + diphosphate = orotate + 5-phospho-alpha-D-ribose 1-diphosphate. Its pathway is pyrimidine metabolism; UMP biosynthesis via de novo pathway; UMP from orotate: step 1/2. Functionally, catalyzes the transfer of a ribosyl phosphate group from 5-phosphoribose 1-diphosphate to orotate, leading to the formation of orotidine monophosphate (OMP). This Dinoroseobacter shibae (strain DSM 16493 / NCIMB 14021 / DFL 12) protein is Orotate phosphoribosyltransferase.